The primary structure comprises 541 residues: Mesoderm induction early response protein 2 (541 aa).

Ser11 carries the post-translational modification Phosphoserine. Disordered stretches follow at residues 100–119 (DPIS…LPDM) and 131–186 (LSGE…EEDA). A compositionally biased stretch (polar residues) spans 140–165 (QSSADDLTPSVTSHEASDLFHNQSGS). In terms of domain architecture, ELM2 spans 194–291 (KEIMVGPQFQ…EALRRLRFNV (98 aa)). The region spanning 296–348 (DGLCAWSEEECRNFEHGFRVHGKNFHLIQANKVRTRSVGECVEYYYLWKKSER) is the SANT domain. The disordered stretch occupies residues 364–440 (VSSGTTDTEQ…EPPAVPSLQQ (77 aa)).

As to quaternary structure, part of a complex containing at least CDYL, MIER1, MIER2, HDAC1 and HDAC2.

It is found in the nucleus. Its function is as follows. Transcriptional repressor. The sequence is that of Mesoderm induction early response protein 2 (Mier2) from Mus musculus (Mouse).